A 252-amino-acid chain; its full sequence is 3-dehydroquinate dehydratase (252 aa).

3-dehydroquinate is bound by residues Ser21, 46–48, and Arg82; that span reads EWR. His143 functions as the Proton donor/acceptor in the catalytic mechanism. Lys170 functions as the Schiff-base intermediate with substrate in the catalytic mechanism. Positions 213, 232, and 236 each coordinate 3-dehydroquinate.

It belongs to the type-I 3-dehydroquinase family. In terms of assembly, homodimer.

It carries out the reaction 3-dehydroquinate = 3-dehydroshikimate + H2O. It functions in the pathway metabolic intermediate biosynthesis; chorismate biosynthesis; chorismate from D-erythrose 4-phosphate and phosphoenolpyruvate: step 3/7. Its function is as follows. Involved in the third step of the chorismate pathway, which leads to the biosynthesis of aromatic amino acids. Catalyzes the cis-dehydration of 3-dehydroquinate (DHQ) and introduces the first double bond of the aromatic ring to yield 3-dehydroshikimate. This is 3-dehydroquinate dehydratase from Salmonella paratyphi A (strain ATCC 9150 / SARB42).